The sequence spans 296 residues: NAD kinase (296 aa).

Asp-73 (proton acceptor) is an active-site residue. Residues 73–74 (DG), Lys-78, 151–152 (NE), Arg-178, Asp-180, and 191–196 (TAHAMS) contribute to the NAD(+) site.

This sequence belongs to the NAD kinase family. The cofactor is a divalent metal cation.

It localises to the cytoplasm. It catalyses the reaction NAD(+) + ATP = ADP + NADP(+) + H(+). Involved in the regulation of the intracellular balance of NAD and NADP, and is a key enzyme in the biosynthesis of NADP. Catalyzes specifically the phosphorylation on 2'-hydroxyl of the adenosine moiety of NAD to yield NADP. The polypeptide is NAD kinase (Francisella tularensis subsp. mediasiatica (strain FSC147)).